Here is a 398-residue protein sequence, read N- to C-terminus: Apolipoprotein L1 (398 aa).

An N-terminal signal peptide occupies residues 1–27; it reads MEGAALLRVSVLCIWMSALFLGVGVRA. Over residues 35 to 47 the composition is skewed to polar residues; that stretch reads QQNVPSGTDTGDP. The segment at 35-55 is disordered; sequence QQNVPSGTDTGDPQSKPLGDW. Asn261 carries an N-linked (GlcNAc...) asparagine glycan. The segment at 297–317 is disordered; it reads PHASASRPRVTEPISAESGEQ. Phosphoserine; by FAM20C occurs at positions 311 and 314.

The protein belongs to the apolipoprotein L family. As to quaternary structure, in plasma, interacts with APOA1 and mainly associated with large high density lipoprotein particles. Post-translationally, phosphorylated by FAM20C in the extracellular medium. Plasma. Found on APOA-I-containing high density lipoprotein (HDL3). Expressed in pancreas, lung, prostate, liver, placenta and spleen.

The protein resides in the secreted. Its function is as follows. May play a role in lipid exchange and transport throughout the body. May participate in reverse cholesterol transport from peripheral cells to the liver. This Homo sapiens (Human) protein is Apolipoprotein L1 (APOL1).